Reading from the N-terminus, the 141-residue chain is Large ribosomal subunit protein uL11 (141 aa).

The protein belongs to the universal ribosomal protein uL11 family. Part of the ribosomal stalk of the 50S ribosomal subunit. Interacts with L10 and the large rRNA to form the base of the stalk. L10 forms an elongated spine to which L12 dimers bind in a sequential fashion forming a multimeric L10(L12)X complex. Post-translationally, one or more lysine residues are methylated.

In terms of biological role, forms part of the ribosomal stalk which helps the ribosome interact with GTP-bound translation factors. The polypeptide is Large ribosomal subunit protein uL11 (Listeria innocua serovar 6a (strain ATCC BAA-680 / CLIP 11262)).